A 274-amino-acid chain; its full sequence is Bis(5'-nucleosyl)-tetraphosphatase, symmetrical (274 aa).

The protein belongs to the Ap4A hydrolase family.

It carries out the reaction P(1),P(4)-bis(5'-adenosyl) tetraphosphate + H2O = 2 ADP + 2 H(+). Functionally, hydrolyzes diadenosine 5',5'''-P1,P4-tetraphosphate to yield ADP. The polypeptide is Bis(5'-nucleosyl)-tetraphosphatase, symmetrical (Shewanella oneidensis (strain ATCC 700550 / JCM 31522 / CIP 106686 / LMG 19005 / NCIMB 14063 / MR-1)).